The primary structure comprises 411 residues: Lissencephaly-1 homolog (411 aa).

In terms of domain architecture, LisH spans 9-41 (QREELNQAIADYLGSNGYADSLETFRKEADLST). A coiled-coil region spans residues 56–83 (TSVIRLQKKVMELEAKLTEAEKEVIEGA). WD repeat units lie at residues 106 to 147 (GHRA…RSLK), 148 to 187 (GHTD…ECIK), 191 to 230 (GHDH…CVKT), 233 to 272 (GHRE…CKVE), 275 to 334 (DHEH…CLLT), 337 to 376 (GHDN…CMKT), and 379 to 411 (AHQH…WECR).

The protein belongs to the WD repeat LIS1/nudF family.

It localises to the cytoplasm. The protein localises to the cytoskeleton. Its subcellular location is the microtubule organizing center. It is found in the centrosome. In terms of biological role, positively regulates the activity of the minus-end directed microtubule motor protein dynein. May enhance dynein-mediated microtubule sliding by targeting dynein to the microtubule plus end. Required for several dynein- and microtubule-dependent processes. The polypeptide is Lissencephaly-1 homolog (Drosophila yakuba (Fruit fly)).